Here is a 540-residue protein sequence, read N- to C-terminus: Transcription termination/antitermination protein NusA (540 aa).

In terms of domain architecture, S1 motif spans 144–214 (GQVIEARVED…SMWPITLSRS (71 aa)). A KH domain is found at 319–386 (DTSIEIVVPA…QGIFGIKKRR (68 aa)). Residues 457-540 (VAAPTPTPAP…KQTFDNFDDL (84 aa)) form a disordered region. A compositionally biased stretch (pro residues) spans 461–489 (TPTPAPQPTPAPTKVEPVPPPVSVTPKPI). Residues 512-522 (DDSKTKPEKSS) are compositionally biased toward basic and acidic residues. The segment covering 523–540 (AKTNTPQTKQTFDNFDDL) has biased composition (polar residues).

It belongs to the NusA family. In terms of assembly, monomer. Binds directly to the core enzyme of the DNA-dependent RNA polymerase and to nascent RNA.

The protein resides in the cytoplasm. Participates in both transcription termination and antitermination. This is Transcription termination/antitermination protein NusA from Mycoplasma pneumoniae (strain ATCC 29342 / M129 / Subtype 1) (Mycoplasmoides pneumoniae).